A 326-amino-acid chain; its full sequence is Phospho-N-acetylmuramoyl-pentapeptide-transferase (326 aa).

Transmembrane regions (helical) follow at residues I3–I23, T51–F71, V79–L99, L115–I135, V138–V158, G169–A189, M195–N215, V221–H243, and F306–M326.

It belongs to the glycosyltransferase 4 family. MraY subfamily. It depends on Mg(2+) as a cofactor.

It localises to the cell membrane. It catalyses the reaction UDP-N-acetyl-alpha-D-muramoyl-L-alanyl-gamma-D-glutamyl-L-lysyl-D-alanyl-D-alanine + di-trans,octa-cis-undecaprenyl phosphate = Mur2Ac(oyl-L-Ala-gamma-D-Glu-L-Lys-D-Ala-D-Ala)-di-trans,octa-cis-undecaprenyl diphosphate + UMP. The protein operates within cell wall biogenesis; peptidoglycan biosynthesis. Functionally, catalyzes the initial step of the lipid cycle reactions in the biosynthesis of the cell wall peptidoglycan: transfers peptidoglycan precursor phospho-MurNAc-pentapeptide from UDP-MurNAc-pentapeptide onto the lipid carrier undecaprenyl phosphate, yielding undecaprenyl-pyrophosphoryl-MurNAc-pentapeptide, known as lipid I. The chain is Phospho-N-acetylmuramoyl-pentapeptide-transferase from Streptococcus pneumoniae (strain 70585).